The following is a 113-amino-acid chain: Iron-sulfur cluster insertion protein ErpA (113 aa).

Residues Cys-41, Cys-105, and Cys-107 each contribute to the iron-sulfur cluster site.

It belongs to the HesB/IscA family. In terms of assembly, homodimer. The cofactor is iron-sulfur cluster.

Functionally, required for insertion of 4Fe-4S clusters for at least IspG. In Histophilus somni (strain 129Pt) (Haemophilus somnus), this protein is Iron-sulfur cluster insertion protein ErpA.